Reading from the N-terminus, the 40-residue chain is Snaclec tokaracetin subunit alpha (40 aa).

The C-type lectin domain occupies 1–40 (DCPSGWSSFKQYCYKPFKQLKTWEDAERFCLEQVKGAHLV). C2 and C13 are disulfide-bonded.

It belongs to the snaclec family. As to quaternary structure, heterodimer of subunits alpha and beta; disulfide-linked. As to expression, expressed by the venom gland.

Its subcellular location is the secreted. Its function is as follows. Platelet antagonist that specifically and reversibly binds to a site on platelet glycoprotein Ibalpha (GP1BA) close to or identical with the site for vWF binding. It inhibits the binding of vWF to platelets and vWF-dependent shear-induced platelet aggregation. The sequence is that of Snaclec tokaracetin subunit alpha from Protobothrops tokarensis (Tokara habu).